Reading from the N-terminus, the 333-residue chain is Leucine carboxyl methyltransferase 1 (333 aa).

S-adenosyl-L-methionine is bound by residues Arg79, Gly108, Asp131, Asn180–Val181, and Glu206.

This sequence belongs to the methyltransferase superfamily. LCMT family.

The catalysed reaction is [phosphatase 2A protein]-C-terminal L-leucine + S-adenosyl-L-methionine = [phosphatase 2A protein]-C-terminal L-leucine methyl ester + S-adenosyl-L-homocysteine. In terms of biological role, methylates the carboxyl group of the C-terminal leucine residue of protein phosphatase 2A catalytic subunits to form alpha-leucine ester residues. This chain is Leucine carboxyl methyltransferase 1 (PPM1), found in Kluyveromyces lactis (strain ATCC 8585 / CBS 2359 / DSM 70799 / NBRC 1267 / NRRL Y-1140 / WM37) (Yeast).